The following is a 371-amino-acid chain: Aminomethyltransferase (371 aa).

Belongs to the GcvT family. In terms of assembly, the glycine cleavage system is composed of four proteins: P, T, L and H.

The enzyme catalyses N(6)-[(R)-S(8)-aminomethyldihydrolipoyl]-L-lysyl-[protein] + (6S)-5,6,7,8-tetrahydrofolate = N(6)-[(R)-dihydrolipoyl]-L-lysyl-[protein] + (6R)-5,10-methylene-5,6,7,8-tetrahydrofolate + NH4(+). In terms of biological role, the glycine cleavage system catalyzes the degradation of glycine. The sequence is that of Aminomethyltransferase from Oceanobacillus iheyensis (strain DSM 14371 / CIP 107618 / JCM 11309 / KCTC 3954 / HTE831).